A 1198-amino-acid polypeptide reads, in one-letter code: Fibronectin type-III domain-containing protein 3A (1198 aa).

The segment covering 188–201 has biased composition (basic and acidic residues); sequence KKLKDRQGTQKDKM. The interval 188 to 257 is disordered; the sequence is KKLKDRQGTQ…VDPEMEEKDE (70 aa). 3 positions are modified to phosphoserine: serine 203, serine 207, and serine 213. Fibronectin type-III domains lie at 268–369, 373–465, 469–562, 566–660, 664–757, 761–851, 863–950, 951–1045, and 1049–1151; these read NIVK…TLSC, PPNA…TSGC, VPAS…TCPD, VPVK…TPAV, PCLP…TAPG, QCRP…TPPS, SDDD…TKPL, PPDP…TPKS, and ALKA…TEPP. Lysine 384 bears the N6-acetyllysine mark. The chain crosses the membrane as a helical span at residues 1177 to 1197; that stretch reads ILVVFAFFSILIAFIIQYFVI.

It belongs to the FNDC3 family. As to expression, testis. Localizes to the acrosome of spermatids, as well as to Leydig cells. Can be detected on the acrosome beginning at steps 2-3 and continuing until step 12 of spermiogenesis.

It is found in the golgi apparatus membrane. Mediates spermatid-Sertoli adhesion during spermatogenesis. The sequence is that of Fibronectin type-III domain-containing protein 3A (Fndc3a) from Mus musculus (Mouse).